Consider the following 141-residue polypeptide: Large ribosomal subunit protein uL11 (141 aa).

Belongs to the universal ribosomal protein uL11 family. As to quaternary structure, part of the ribosomal stalk of the 50S ribosomal subunit. Interacts with L10 and the large rRNA to form the base of the stalk. L10 forms an elongated spine to which L12 dimers bind in a sequential fashion forming a multimeric L10(L12)X complex. One or more lysine residues are methylated.

In terms of biological role, forms part of the ribosomal stalk which helps the ribosome interact with GTP-bound translation factors. The polypeptide is Large ribosomal subunit protein uL11 (Picosynechococcus sp. (strain ATCC 27264 / PCC 7002 / PR-6) (Agmenellum quadruplicatum)).